Reading from the N-terminus, the 122-residue chain is Large ribosomal subunit protein uL14 (122 aa).

The protein belongs to the universal ribosomal protein uL14 family. Part of the 50S ribosomal subunit. Forms a cluster with proteins L3 and L19. In the 70S ribosome, L14 and L19 interact and together make contacts with the 16S rRNA in bridges B5 and B8.

Binds to 23S rRNA. Forms part of two intersubunit bridges in the 70S ribosome. The chain is Large ribosomal subunit protein uL14 from Nocardia farcinica (strain IFM 10152).